We begin with the raw amino-acid sequence, 155 residues long: Fibroblast growth factor 1 (155 aa).

The propeptide occupies 1–15; the sequence is MAEGEITTFTALTER. N33 lines the heparin pocket. Residues 127–143 are heparin-binding; that stretch reads KKNGNSKLGPRTHYGQK.

Belongs to the heparin-binding growth factors family.

It is found in the secreted. The protein localises to the cytoplasm. Its subcellular location is the cell cortex. It localises to the cytosol. The protein resides in the nucleus. Plays an important role in the regulation of cell survival, cell division, angiogenesis, cell differentiation and cell migration. Functions as a potent mitogen in vitro. Acts as a ligand for FGFR1 and integrins. Binds to FGFR1 in the presence of heparin leading to FGFR1 dimerization and activation via sequential autophosphorylation on tyrosine residues which act as docking sites for interacting proteins, leading to the activation of several signaling cascades. Binds to integrins. Its binding to integrins and subsequent ternary complex formation with integrins and FGFR1 are essential for FGF1 signaling. This chain is Fibroblast growth factor 1 (FGF1), found in Gallus gallus (Chicken).